The primary structure comprises 751 residues: Photosystem I P700 chlorophyll a apoprotein A1 (751 aa).

Transmembrane regions (helical) follow at residues 73 to 96, 159 to 182, 198 to 222, 294 to 312, 349 to 372, 388 to 414, 436 to 458, and 533 to 551; these read VFSA…FHGA, LYAT…FHYH, MNHH…HISL, EAHH…GHQY, WHAQ…HHMY, LSLF…IFMV, AIIS…LYIH, and FLVH…LILL. [4Fe-4S] cluster contacts are provided by Cys575 and Cys584. 2 helical membrane passes run 591–612 and 665–687; these read HVFL…HFSW and LSAY…MFLF. His676 lines the chlorophyll a' pocket. Positions 684 and 692 each coordinate chlorophyll a. Trp693 is a phylloquinone binding site. A helical transmembrane segment spans residues 725-745; sequence AVGVAHYLLGGIATTWSFFLA.

The protein belongs to the PsaA/PsaB family. In terms of assembly, the PsaA/B heterodimer binds the P700 chlorophyll special pair and subsequent electron acceptors. PSI consists of a core antenna complex that captures photons, and an electron transfer chain that converts photonic excitation into a charge separation. The eukaryotic PSI reaction center is composed of at least 11 subunits. P700 is a chlorophyll a/chlorophyll a' dimer, A0 is one or more chlorophyll a, A1 is one or both phylloquinones and FX is a shared 4Fe-4S iron-sulfur center. serves as cofactor.

It is found in the plastid. It localises to the chloroplast thylakoid membrane. It catalyses the reaction reduced [plastocyanin] + hnu + oxidized [2Fe-2S]-[ferredoxin] = oxidized [plastocyanin] + reduced [2Fe-2S]-[ferredoxin]. In terms of biological role, psaA and PsaB bind P700, the primary electron donor of photosystem I (PSI), as well as the electron acceptors A0, A1 and FX. PSI is a plastocyanin/cytochrome c6-ferredoxin oxidoreductase, converting photonic excitation into a charge separation, which transfers an electron from the donor P700 chlorophyll pair to the spectroscopically characterized acceptors A0, A1, FX, FA and FB in turn. Oxidized P700 is reduced on the lumenal side of the thylakoid membrane by plastocyanin or cytochrome c6. The sequence is that of Photosystem I P700 chlorophyll a apoprotein A1 from Oltmannsiellopsis viridis (Marine flagellate).